Here is a 354-residue protein sequence, read N- to C-terminus: tRNA-specific 2-thiouridylase MnmA (354 aa).

ATP contacts are provided by residues 6–13 (LLSGGVDS) and Leu-33. The Nucleophile role is filled by Cys-100. A disulfide bridge links Cys-100 with Cys-195. Gly-123 contributes to the ATP binding site. Residues 145 to 147 (KDQ) are interaction with tRNA. Cys-195 (cysteine persulfide intermediate) is an active-site residue.

It belongs to the MnmA/TRMU family.

It is found in the cytoplasm. The enzyme catalyses S-sulfanyl-L-cysteinyl-[protein] + uridine(34) in tRNA + AH2 + ATP = 2-thiouridine(34) in tRNA + L-cysteinyl-[protein] + A + AMP + diphosphate + H(+). Its function is as follows. Catalyzes the 2-thiolation of uridine at the wobble position (U34) of tRNA, leading to the formation of s(2)U34. The chain is tRNA-specific 2-thiouridylase MnmA from Borrelia hermsii (strain HS1 / DAH).